The chain runs to 132 residues: Small ribosomal subunit protein uS8 (132 aa).

It belongs to the universal ribosomal protein uS8 family. Part of the 30S ribosomal subunit. Contacts proteins S5 and S12.

Its function is as follows. One of the primary rRNA binding proteins, it binds directly to 16S rRNA central domain where it helps coordinate assembly of the platform of the 30S subunit. This Staphylococcus aureus (strain USA300) protein is Small ribosomal subunit protein uS8.